We begin with the raw amino-acid sequence, 410 residues long: Serine proteinase inhibitor A3K (410 aa).

The signal sequence occupies residues M1–A24. N-linked (GlcNAc...) asparagine glycans are attached at residues N62, N99, N162, N229, and N263. Positions G360–S381 are RCL.

It belongs to the serpin family.

The protein localises to the secreted. It is found in the extracellular space. In terms of biological role, contrapsin inhibits trypsin-like proteases. The protein is Serine proteinase inhibitor A3K (SERPINA3K) of Cavia porcellus (Guinea pig).